The chain runs to 375 residues: Alcohol dehydrogenase 1 (375 aa).

Ala1 carries the N-acetylalanine modification. Residues Cys46, His68, Cys98, Cys101, Cys104, Cys112, and Cys175 each contribute to the Zn(2+) site. NAD(+) is bound by residues 200–205, Asp224, Lys229, 293–295, and Arg370; these read GLGGVG and VGL.

This sequence belongs to the zinc-containing alcohol dehydrogenase family. Class-I subfamily. The cofactor is Zn(2+).

The protein localises to the cytoplasm. The enzyme catalyses a primary alcohol + NAD(+) = an aldehyde + NADH + H(+). The catalysed reaction is a secondary alcohol + NAD(+) = a ketone + NADH + H(+). The sequence is that of Alcohol dehydrogenase 1 from Pelophylax perezi (Perez's frog).